A 649-amino-acid polypeptide reads, in one-letter code: Archaeal Lon protease (649 aa).

At 1 to 114 (MFSIKFKTTE…KLDFKAPSST (114 aa)) the chain is on the cytoplasmic side. 47 to 54 (GDPGVGKS) is a binding site for ATP. A helical transmembrane segment spans residues 115–135 (TLLLIMIGAILLSEYLLKYLP). Residues 136–138 (QNY) lie on the Extracellular side of the membrane. A helical membrane pass occupies residues 139–159 (LLAAVTITALIVLIFGFVIIL). Over 160–649 (TSIMGASRAS…DNRGGAERFN (490 aa)) the chain is Cytoplasmic. Positions 456–639 (EPKVGVIYGL…DEIVPLVFDL (184 aa)) constitute a Lon proteolytic domain. Catalysis depends on residues serine 550 and lysine 593.

It belongs to the peptidase S16 family. Archaeal LonB subfamily. As to quaternary structure, homohexamer. Organized in a ring with a central cavity.

Its subcellular location is the cell membrane. Functionally, ATP-dependent serine protease that mediates the selective degradation of mutant and abnormal proteins as well as certain short-lived regulatory proteins. Degrades polypeptides processively. This chain is Archaeal Lon protease, found in Methanocaldococcus jannaschii (strain ATCC 43067 / DSM 2661 / JAL-1 / JCM 10045 / NBRC 100440) (Methanococcus jannaschii).